Reading from the N-terminus, the 615-residue chain is Nitrogen permease regulator 2 (615 aa).

Residues 143 to 167 are compositionally biased toward low complexity; that stretch reads STTTPSTAGPSSTPNPSSNTTPTHP. Disordered stretches follow at residues 143 to 176, 354 to 398, and 527 to 551; these read STTTPSTAGPSSTPNPSSNTTPTHPTSEKDTKDM, SLGS…QNSS, and SATGSRNTAQSGNLKPERPSKVSFE. S362 carries the phosphoserine modification. Positions 373–398 are enriched in low complexity; the sequence is SSSIPSNPDSRTTSFSSTSRVSQNSS. Polar residues predominate over residues 527–539; it reads SATGSRNTAQSGN.

The protein belongs to the NPR2 family. In terms of assembly, component of the SEA complex composed of at least IML1/SEA1, RTC1/SEA2, MTC5/SEA3, NPR2, NPR3, SEA4, SEC13 and SEH1. Forms a heterodimer with NPR3.

The protein localises to the vacuole membrane. Component of the SEA complex which coats the vacuolar membrane and is involved in intracellular trafficking, autophagy, response to nitrogen starvation, and amino acid biogenesis. Mediates inactivation of the TORC1 complex in response to amino acid starvation. Post-transcriptional regulator of nitrogen permeases. May be involved in putative NPR1-dependent phosphorylation of nitrogen permeases or in the processing and targeting of nitrogen permeases at the level of the endoplasmic reticulum. This chain is Nitrogen permease regulator 2 (NPR2), found in Saccharomyces cerevisiae (strain ATCC 204508 / S288c) (Baker's yeast).